Here is a 310-residue protein sequence, read N- to C-terminus: Mitochondrial citrate transporter F (310 aa).

3 Solcar repeats span residues Lys23–His108, Pro115–Leu207, and Asp216–Leu303. 6 helical membrane-spanning segments follow: residues Phe29–Val49, Ser85–Leu105, Ile122–Leu142, Asn186–Arg206, Phe222–Ile242, and Ala275–Phe296.

Belongs to the mitochondrial carrier (TC 2.A.29) family.

The protein resides in the mitochondrion inner membrane. Its function is as follows. Mitochondrial transporter that does not mediate citrate export from mitochondria to cytoplasm. Its exact function has still to be determined. This Aspergillus niger (strain ATCC 1015 / CBS 113.46 / FGSC A1144 / LSHB Ac4 / NCTC 3858a / NRRL 328 / USDA 3528.7) protein is Mitochondrial citrate transporter F.